A 104-amino-acid chain; its full sequence is Vegetative-specific protein H7 (104 aa).

An HTH cro/C1-type domain is found at 43-97; that stretch reads IQRARNALKMTQKELAFKINERPGVINEYESGSAIPSQAVLSKLEKALNVKLRGK. Residues 54-73 constitute a DNA-binding region (H-T-H motif); sequence QKELAFKINERPGVINEYES.

The protein is Vegetative-specific protein H7 (cinD-1) of Dictyostelium discoideum (Social amoeba).